The primary structure comprises 252 residues: Imidazole glycerol phosphate synthase subunit HisF (252 aa).

Catalysis depends on residues aspartate 11 and aspartate 130.

This sequence belongs to the HisA/HisF family. In terms of assembly, heterodimer of HisH and HisF.

The protein resides in the cytoplasm. The catalysed reaction is 5-[(5-phospho-1-deoxy-D-ribulos-1-ylimino)methylamino]-1-(5-phospho-beta-D-ribosyl)imidazole-4-carboxamide + L-glutamine = D-erythro-1-(imidazol-4-yl)glycerol 3-phosphate + 5-amino-1-(5-phospho-beta-D-ribosyl)imidazole-4-carboxamide + L-glutamate + H(+). Its pathway is amino-acid biosynthesis; L-histidine biosynthesis; L-histidine from 5-phospho-alpha-D-ribose 1-diphosphate: step 5/9. IGPS catalyzes the conversion of PRFAR and glutamine to IGP, AICAR and glutamate. The HisF subunit catalyzes the cyclization activity that produces IGP and AICAR from PRFAR using the ammonia provided by the HisH subunit. This chain is Imidazole glycerol phosphate synthase subunit HisF, found in Staphylococcus aureus (strain MRSA252).